We begin with the raw amino-acid sequence, 211 residues long: Probable GTP-binding protein EngB (211 aa).

One can recognise an EngB-type G domain in the interval 26-200 (SGIEVAFAGR…RQKLDNWFST (175 aa)). GTP is bound by residues 34-41 (GRSNAGKS), 61-65 (GRTQL), 79-82 (DLPG), 146-149 (TKAD), and 179-181 (FSS). Mg(2+) is bound by residues Ser-41 and Thr-63.

This sequence belongs to the TRAFAC class TrmE-Era-EngA-EngB-Septin-like GTPase superfamily. EngB GTPase family. Mg(2+) serves as cofactor.

Its function is as follows. Necessary for normal cell division and for the maintenance of normal septation. This is Probable GTP-binding protein EngB from Pectobacterium carotovorum subsp. carotovorum (strain PC1).